We begin with the raw amino-acid sequence, 157 residues long: Crossover junction endodeoxyribonuclease RuvC (157 aa).

Active-site residues include Asp7, Glu67, and Asp140. The Mg(2+) site is built by Asp7, Glu67, and Asp140.

This sequence belongs to the RuvC family. In terms of assembly, homodimer which binds Holliday junction (HJ) DNA. The HJ becomes 2-fold symmetrical on binding to RuvC with unstacked arms; it has a different conformation from HJ DNA in complex with RuvA. In the full resolvosome a probable DNA-RuvA(4)-RuvB(12)-RuvC(2) complex forms which resolves the HJ. Mg(2+) serves as cofactor.

It is found in the cytoplasm. The catalysed reaction is Endonucleolytic cleavage at a junction such as a reciprocal single-stranded crossover between two homologous DNA duplexes (Holliday junction).. The RuvA-RuvB-RuvC complex processes Holliday junction (HJ) DNA during genetic recombination and DNA repair. Endonuclease that resolves HJ intermediates. Cleaves cruciform DNA by making single-stranded nicks across the HJ at symmetrical positions within the homologous arms, yielding a 5'-phosphate and a 3'-hydroxyl group; requires a central core of homology in the junction. The consensus cleavage sequence is 5'-(A/T)TT(C/G)-3'. Cleavage occurs on the 3'-side of the TT dinucleotide at the point of strand exchange. HJ branch migration catalyzed by RuvA-RuvB allows RuvC to scan DNA until it finds its consensus sequence, where it cleaves and resolves the cruciform DNA. This chain is Crossover junction endodeoxyribonuclease RuvC, found in Rickettsia massiliae (strain Mtu5).